Here is a 381-residue protein sequence, read N- to C-terminus: Chorismate synthase (381 aa).

The NADP(+) site is built by arginine 39 and arginine 45. FMN is bound by residues arginine 127 to serine 129, glutamine 248 to serine 249, glycine 293, lysine 308 to threonine 312, and arginine 334.

It belongs to the chorismate synthase family. As to quaternary structure, homotetramer. It depends on FMNH2 as a cofactor.

It carries out the reaction 5-O-(1-carboxyvinyl)-3-phosphoshikimate = chorismate + phosphate. Its pathway is metabolic intermediate biosynthesis; chorismate biosynthesis; chorismate from D-erythrose 4-phosphate and phosphoenolpyruvate: step 7/7. Functionally, catalyzes the anti-1,4-elimination of the C-3 phosphate and the C-6 proR hydrogen from 5-enolpyruvylshikimate-3-phosphate (EPSP) to yield chorismate, which is the branch point compound that serves as the starting substrate for the three terminal pathways of aromatic amino acid biosynthesis. This reaction introduces a second double bond into the aromatic ring system. The sequence is that of Chorismate synthase from Caldicellulosiruptor saccharolyticus (strain ATCC 43494 / DSM 8903 / Tp8T 6331).